A 281-amino-acid chain; its full sequence is Shikimate dehydrogenase (NADP(+)) (281 aa).

Shikimate is bound by residues 14-16 (SRS) and T61. The Proton acceptor role is filled by K65. The shikimate site is built by N86 and D101. Residues 127–131 (GAGGA), 151–156 (NRTLAR), and V216 contribute to the NADP(+) site. Position 218 (Y218) interacts with shikimate. G239 is a binding site for NADP(+).

The protein belongs to the shikimate dehydrogenase family. As to quaternary structure, homodimer.

The enzyme catalyses shikimate + NADP(+) = 3-dehydroshikimate + NADPH + H(+). It participates in metabolic intermediate biosynthesis; chorismate biosynthesis; chorismate from D-erythrose 4-phosphate and phosphoenolpyruvate: step 4/7. Functionally, involved in the biosynthesis of the chorismate, which leads to the biosynthesis of aromatic amino acids. Catalyzes the reversible NADPH linked reduction of 3-dehydroshikimate (DHSA) to yield shikimate (SA). This Azorhizobium caulinodans (strain ATCC 43989 / DSM 5975 / JCM 20966 / LMG 6465 / NBRC 14845 / NCIMB 13405 / ORS 571) protein is Shikimate dehydrogenase (NADP(+)).